The primary structure comprises 334 residues: Nucleoid-associated protein YpsIP31758_2721 (334 aa).

The protein belongs to the YejK family.

The protein resides in the cytoplasm. The protein localises to the nucleoid. This Yersinia pseudotuberculosis serotype O:1b (strain IP 31758) protein is Nucleoid-associated protein YpsIP31758_2721.